Here is a 311-residue protein sequence, read N- to C-terminus: MSKTSLVTAFILTGLPHAPGLDAPLFGIFLVVYVLTVLGNLLILLVIRVDSHLHTPMYYFLTNLSFIDMWFSTVTVPKMLMTLVSPSGRAISFHSCVAQLYFFHFLGSTECFLYTVMSYDRYLAISYPLRYTSMMSGSRCALLATSTWLSGSLHSAVQTILTFHLPYCGPNQIQHYLCDAPPILKLACADTSANEMVIFVDIGLVASGCFLLIVLSYVSIVCSILRIHTSEGRHRAFQTCASHCIVVLCFFVPCVFIYLRPGSRDVVDGVVAIFYTVLTPLLNPVVYTLRNKEVKKAVLKLRDKVAHSQGE.

Residues 1 to 23 lie on the Extracellular side of the membrane; sequence MSKTSLVTAFILTGLPHAPGLDA. The chain crosses the membrane as a helical span at residues 24-44; it reads PLFGIFLVVYVLTVLGNLLIL. Residues 45–52 lie on the Cytoplasmic side of the membrane; that stretch reads LVIRVDSH. A helical transmembrane segment spans residues 53–73; the sequence is LHTPMYYFLTNLSFIDMWFST. Residues 74–98 lie on the Extracellular side of the membrane; it reads VTVPKMLMTLVSPSGRAISFHSCVA. Cys96 and Cys188 are oxidised to a cystine. The helical transmembrane segment at 99-119 threads the bilayer; it reads QLYFFHFLGSTECFLYTVMSY. The Cytoplasmic segment spans residues 120-138; sequence DRYLAISYPLRYTSMMSGS. The helical transmembrane segment at 139-159 threads the bilayer; that stretch reads RCALLATSTWLSGSLHSAVQT. Topologically, residues 160-196 are extracellular; the sequence is ILTFHLPYCGPNQIQHYLCDAPPILKLACADTSANEM. A helical membrane pass occupies residues 197 to 216; it reads VIFVDIGLVASGCFLLIVLS. Residues 217–236 are Cytoplasmic-facing; that stretch reads YVSIVCSILRIHTSEGRHRA. A helical membrane pass occupies residues 237–257; sequence FQTCASHCIVVLCFFVPCVFI. Over 258-268 the chain is Extracellular; that stretch reads YLRPGSRDVVD. Residues 269-289 traverse the membrane as a helical segment; sequence GVVAIFYTVLTPLLNPVVYTL. The Cytoplasmic segment spans residues 290 to 311; that stretch reads RNKEVKKAVLKLRDKVAHSQGE.

This sequence belongs to the G-protein coupled receptor 1 family.

The protein localises to the cell membrane. Its function is as follows. Odorant receptor. The chain is Olfactory receptor 10G9 (OR10G9) from Homo sapiens (Human).